The following is a 239-amino-acid chain: Ribonuclease 3 (239 aa).

Residues 11-133 (HAAIQKKLGY…MFAAVSFDAD (123 aa)) enclose the RNase III domain. Glu-46 serves as a coordination point for Mg(2+). The active site involves Asp-50. The Mg(2+) site is built by Asp-119 and Glu-122. The DRBM domain occupies 160–230 (DGKTALQEAL…AKEALKWLEE (71 aa)).

It belongs to the ribonuclease III family. In terms of assembly, homodimer. Mg(2+) is required as a cofactor.

The protein resides in the cytoplasm. It carries out the reaction Endonucleolytic cleavage to 5'-phosphomonoester.. Its function is as follows. Digests double-stranded RNA. Involved in the processing of primary rRNA transcript to yield the immediate precursors to the large and small rRNAs (23S and 16S). Also processes some mRNAs, and tRNAs when they are encoded in the rRNA operon. Functionally, CRISPR (clustered regularly interspaced short palindromic repeat) is an adaptive immune system that provides protection against mobile genetic elements (viruses, transposable elements and conjugative plasmids). CRISPR clusters contain spacers, sequences complementary to antecedent mobile elements, and target invading nucleic acids. CRISPR clusters are transcribed and processed into CRISPR RNA (crRNA). In this organism endogenous ribonuclease 3 and Cas9 are required for correct coprocessing of pre-crRNA and the trans-encoded small RNA (tracrRNA). Cas9, crRNA and tracRNA are required for cleavage of invading DNA. Involved in 3'-end processing but not 5'-end processing of crRNA and tracrRNA. The protein is Ribonuclease 3 of Neisseria meningitidis serogroup C (strain 8013).